Reading from the N-terminus, the 180-residue chain is Formate hydrogenlyase subunit 6 (180 aa).

4Fe-4S ferredoxin-type domains follow at residues 31 to 60 (GKPE…VETD) and 66 to 95 (LAWE…LSQE). [4Fe-4S] cluster contacts are provided by C40, C43, C46, C50, C75, C78, C81, and C85.

As to quaternary structure, FHL comprises of a formate dehydrogenase, unidentified electron carriers and a hydrogenase (isoenzyme 3). In this non-energy conserving pathway, molecular hydrogen and carbodioxide are released from formate.

Its function is as follows. Probable electron transfer protein for hydrogenase 3. This chain is Formate hydrogenlyase subunit 6 (hycF), found in Escherichia coli (strain K12).